Reading from the N-terminus, the 132-residue chain is Small ribosomal subunit protein uS8 (132 aa).

The protein belongs to the universal ribosomal protein uS8 family. As to quaternary structure, part of the 30S ribosomal subunit. Contacts proteins S5 and S12.

One of the primary rRNA binding proteins, it binds directly to 16S rRNA central domain where it helps coordinate assembly of the platform of the 30S subunit. In Macrococcus caseolyticus (strain JCSC5402) (Macrococcoides caseolyticum), this protein is Small ribosomal subunit protein uS8.